Consider the following 386-residue polypeptide: Glutamate 5-kinase (386 aa).

Lys28 provides a ligand contact to ATP. The substrate site is built by Ser68, Asp155, and Asn167. 187 to 188 (TD) contributes to the ATP binding site. Positions 294 to 372 (RGRLVLDDGA…EKIESILGYI (79 aa)) constitute a PUA domain.

This sequence belongs to the glutamate 5-kinase family.

It is found in the cytoplasm. The catalysed reaction is L-glutamate + ATP = L-glutamyl 5-phosphate + ADP. It functions in the pathway amino-acid biosynthesis; L-proline biosynthesis; L-glutamate 5-semialdehyde from L-glutamate: step 1/2. Functionally, catalyzes the transfer of a phosphate group to glutamate to form L-glutamate 5-phosphate. The protein is Glutamate 5-kinase of Hahella chejuensis (strain KCTC 2396).